The chain runs to 186 residues: Ferritin heavy chain (186 aa).

The 150-residue stretch at 16–165 folds into the Ferritin-like diiron domain; sequence QNYHQDSEAA…DHVTNLRKMG (150 aa). Fe cation contacts are provided by Glu33, Glu68, His71, Glu113, and Gln147. Position 184 is a phosphoserine (Ser184).

This sequence belongs to the ferritin family. Oligomer of 24 subunits. There are two types of subunits: L (light) chain and H (heavy) chain. The major chain can be light or heavy, depending on the species and tissue type. The functional molecule forms a roughly spherical shell with a diameter of 12 nm and contains a central cavity into which the insoluble mineral iron core is deposited. Interacts with NCOA4; NCOA4 promotes targeting of the iron-binding ferritin complex to autolysosomes following starvation or iron depletion.

The protein resides in the cytoplasm. The protein localises to the lysosome. It is found in the cytoplasmic vesicle. It localises to the autophagosome. The catalysed reaction is 4 Fe(2+) + O2 + 4 H(+) = 4 Fe(3+) + 2 H2O. Stores iron in a soluble, non-toxic, readily available form. Important for iron homeostasis. Has ferroxidase activity. Iron is taken up in the ferrous form and deposited as ferric hydroxides after oxidation. Also plays a role in delivery of iron to cells. Mediates iron uptake in capsule cells of the developing kidney. Delivery to lysosomes is mediated by the cargo receptor NCOA4 for autophagic degradation and release of iron. In Cricetulus griseus (Chinese hamster), this protein is Ferritin heavy chain (FTH1).